A 366-amino-acid chain; its full sequence is Autophagy-related protein 18b (366 aa).

WD repeat units lie at residues 6 to 44 (SLPSPIYCVSFNQDNSGFAISWKDSFKIFDSTTGRLCYE), 178 to 218 (AHRS…KSYS), and 223 to 265 (TYPS…NQRS).

It belongs to the WD repeat PROPPIN family. As to quaternary structure, component of the PI(3,5)P2 regulatory complex at least composed of ATG18, SAC/FIG4, FAB1 and VAC14. As to expression, expressed in roots, stems, flowers and leaves.

Its subcellular location is the preautophagosomal structure membrane. It localises to the vacuole membrane. In terms of biological role, the PI(3,5)P2 regulatory complex regulates both the synthesis and turnover of phosphatidylinositol 3,5-bisphosphate (PtdIns(3,5)P2). Required for autophagy. This Arabidopsis thaliana (Mouse-ear cress) protein is Autophagy-related protein 18b (ATG18B).